Reading from the N-terminus, the 123-residue chain is cAMP-responsive element-binding protein-like 2 (123 aa).

The disordered stretch occupies residues 1–24 (MDDSKVVGGKVKKPGKRGRKPAKI). A compositionally biased stretch (basic residues) spans 10–21 (KVKKPGKRGRKP). The 64-residue stretch at 23-86 (KIDLKAKLER…MAMDQGKIPS (64 aa)) folds into the bZIP domain. Residues 29–60 (KLERSRQSARECRARKKLRYQYLEELVSSRER) form a basic motif region. A leucine-zipper region spans residues 62 to 69 (ICALREEL). The interval 92 to 123 (LTGEEQSKPQQNSSRHPKAGKTDANTNSLVGN) is disordered. Residues 114–123 (DANTNSLVGN) are compositionally biased toward polar residues.

Belongs to the bZIP family. ATF subfamily. As to quaternary structure, interacts with CREB1; regulates CREB1 phosphorylation, stability and transcriptional activity. In terms of processing, phosphorylated by AMPK. As to expression, widely expressed with higher expression in adipose tissue, skeletal muscle, and liver (at protein level).

The protein localises to the nucleus. Its function is as follows. Probable regulator of CREB1 transcriptional activity which is involved in adipose cells differentiation. May also play a regulatory role in the cell cycle. The protein is cAMP-responsive element-binding protein-like 2 (Crebl2) of Mus musculus (Mouse).